The sequence spans 397 residues: Argininosuccinate synthase (397 aa).

An ATP-binding site is contributed by 9–17 (AYSGGLDTS). Tyr-86 lines the L-citrulline pocket. ATP is bound at residue Gly-116. L-aspartate-binding residues include Thr-118, Asn-122, and Asp-123. Asn-122 contributes to the L-citrulline binding site. L-citrulline contacts are provided by Arg-126, Ser-174, Glu-259, and Tyr-271.

It belongs to the argininosuccinate synthase family. Type 1 subfamily. Homotetramer.

It localises to the cytoplasm. The catalysed reaction is L-citrulline + L-aspartate + ATP = 2-(N(omega)-L-arginino)succinate + AMP + diphosphate + H(+). It participates in amino-acid biosynthesis; L-arginine biosynthesis; L-arginine from L-ornithine and carbamoyl phosphate: step 2/3. The chain is Argininosuccinate synthase from Lactococcus lactis subsp. cremoris (strain SK11).